We begin with the raw amino-acid sequence, 291 residues long: Diaminopimelate epimerase (291 aa).

Positions 13, 46, and 66 each coordinate substrate. C75 acts as the Proton donor in catalysis. Residues 76–77, N170, N203, and 221–222 each bind substrate; these read GN and ER. C230 serves as the catalytic Proton acceptor. Substrate is bound at residue 231 to 232; it reads GS.

Belongs to the diaminopimelate epimerase family. As to quaternary structure, homodimer.

The protein localises to the cytoplasm. The enzyme catalyses (2S,6S)-2,6-diaminopimelate = meso-2,6-diaminopimelate. It functions in the pathway amino-acid biosynthesis; L-lysine biosynthesis via DAP pathway; DL-2,6-diaminopimelate from LL-2,6-diaminopimelate: step 1/1. Its function is as follows. Catalyzes the stereoinversion of LL-2,6-diaminopimelate (L,L-DAP) to meso-diaminopimelate (meso-DAP), a precursor of L-lysine and an essential component of the bacterial peptidoglycan. The sequence is that of Diaminopimelate epimerase from Albidiferax ferrireducens (strain ATCC BAA-621 / DSM 15236 / T118) (Rhodoferax ferrireducens).